The primary structure comprises 408 residues: NADH-quinone oxidoreductase subunit D (408 aa).

The protein belongs to the complex I 49 kDa subunit family. In terms of assembly, NDH-1 is composed of 14 different subunits. Subunits NuoB, C, D, E, F, and G constitute the peripheral sector of the complex.

The protein resides in the cell inner membrane. It catalyses the reaction a quinone + NADH + 5 H(+)(in) = a quinol + NAD(+) + 4 H(+)(out). In terms of biological role, NDH-1 shuttles electrons from NADH, via FMN and iron-sulfur (Fe-S) centers, to quinones in the respiratory chain. The immediate electron acceptor for the enzyme in this species is believed to be ubiquinone. Couples the redox reaction to proton translocation (for every two electrons transferred, four hydrogen ions are translocated across the cytoplasmic membrane), and thus conserves the redox energy in a proton gradient. The protein is NADH-quinone oxidoreductase subunit D of Wolinella succinogenes (strain ATCC 29543 / DSM 1740 / CCUG 13145 / JCM 31913 / LMG 7466 / NCTC 11488 / FDC 602W) (Vibrio succinogenes).